We begin with the raw amino-acid sequence, 452 residues long: D-inositol 3-phosphate glycosyltransferase (452 aa).

H25 is a binding site for 1D-myo-inositol 3-phosphate. Residues 31–32 (QP) and G39 contribute to the UDP-N-acetyl-alpha-D-glucosamine site. 1D-myo-inositol 3-phosphate contacts are provided by residues 36 to 41 (DAGGMN), K94, Y127, T151, and R171. 3 residues coordinate UDP-N-acetyl-alpha-D-glucosamine: R245, K250, and Q309. Mg(2+) contacts are provided by Y318, R319, and S321. E331 and E339 together coordinate UDP-N-acetyl-alpha-D-glucosamine. T345 contacts Mg(2+).

It belongs to the glycosyltransferase group 1 family. MshA subfamily. Homodimer.

It catalyses the reaction 1D-myo-inositol 3-phosphate + UDP-N-acetyl-alpha-D-glucosamine = 1D-myo-inositol 2-acetamido-2-deoxy-alpha-D-glucopyranoside 3-phosphate + UDP + H(+). Functionally, catalyzes the transfer of a N-acetyl-glucosamine moiety to 1D-myo-inositol 3-phosphate to produce 1D-myo-inositol 2-acetamido-2-deoxy-glucopyranoside 3-phosphate in the mycothiol biosynthesis pathway. This chain is D-inositol 3-phosphate glycosyltransferase, found in Rhodococcus jostii (strain RHA1).